The sequence spans 360 residues: Peptide chain release factor 1 (360 aa).

An N5-methylglutamine modification is found at Gln-235.

This sequence belongs to the prokaryotic/mitochondrial release factor family. Methylated by PrmC. Methylation increases the termination efficiency of RF1.

The protein resides in the cytoplasm. In terms of biological role, peptide chain release factor 1 directs the termination of translation in response to the peptide chain termination codons UAG and UAA. This is Peptide chain release factor 1 from Leptothrix cholodnii (strain ATCC 51168 / LMG 8142 / SP-6) (Leptothrix discophora (strain SP-6)).